Here is a 208-residue protein sequence, read N- to C-terminus: Thymidylate kinase (208 aa).

Position 10 to 17 (10 to 17) interacts with ATP; it reads GIDGCGKT.

Belongs to the thymidylate kinase family.

It catalyses the reaction dTMP + ATP = dTDP + ADP. Its function is as follows. Phosphorylation of dTMP to form dTDP in both de novo and salvage pathways of dTTP synthesis. This Caldanaerobacter subterraneus subsp. tengcongensis (strain DSM 15242 / JCM 11007 / NBRC 100824 / MB4) (Thermoanaerobacter tengcongensis) protein is Thymidylate kinase.